The chain runs to 151 residues: Large ribosomal subunit protein uL22c (151 aa).

The protein belongs to the universal ribosomal protein uL22 family. In terms of assembly, part of the 50S ribosomal subunit.

It localises to the plastid. The protein resides in the chloroplast. Functionally, this protein binds specifically to 23S rRNA. Its function is as follows. The globular domain of the protein is located near the polypeptide exit tunnel on the outside of the subunit, while an extended beta-hairpin is found that lines the wall of the exit tunnel in the center of the 70S ribosome. The chain is Large ribosomal subunit protein uL22c (rpl22) from Gossypium barbadense (Sea Island cotton).